Reading from the N-terminus, the 147-residue chain is Large ribosomal subunit protein uL15 (147 aa).

The tract at residues Met1 to Arg42 is disordered.

Belongs to the universal ribosomal protein uL15 family. Part of the 50S ribosomal subunit.

In terms of biological role, binds to the 23S rRNA. This Salinispora tropica (strain ATCC BAA-916 / DSM 44818 / JCM 13857 / NBRC 105044 / CNB-440) protein is Large ribosomal subunit protein uL15.